A 175-amino-acid polypeptide reads, in one-letter code: Pituitary adenylate cyclase-activating polypeptide (175 aa).

An N-terminal signal peptide occupies residues 1-24 (MTMCSGARLALLVYGIIMHSSVSC). The propeptide occupies 25–78 (SPAAGLSFPGIRPEDEAYDQDGNPLQDFYDWDPPGVGSPASALRDAYALYYPAD). Positions 149 to 157 (VKKYLAAVL) are important for receptor binding. Leucine 157 bears the Leucine amide mark. Lysine 168 is subject to Lysine amide. Positions 172–175 (IAYL) are excised as a propeptide.

Belongs to the glucagon family.

Its subcellular location is the secreted. Functionally, PACAP is a neuropeptide involved in diverse array of physiological processes through activating the PACAP subfamily of class B1 G protein-coupled receptors: VIP receptor 1 (VIPR1), VIP receptor 2 (VIPR2), and PACAP type I receptor (ADCYAP1R1). Exerts neuroprotective and general cytoprotective effects due to anti-apoptotic, anti-inflammatory, and antioxidant actions. Promotes neuron projection development through the RAPGEF2/Rap1/B-Raf/ERK pathway. In chromaffin cells, induces long-lasting increase of intracellular calcium concentrations and neuroendocrine secretion. Involved in the control of glucose homeostasis, induces insulin secretion by pancreatic beta cells. PACAP exists in two bioactive forms from proteolysis of the same precursor protein, PACAP27 and PACAP38, which differ by eleven amino acid residues in the C-terminus. The sequence is that of Pituitary adenylate cyclase-activating polypeptide from Mus musculus (Mouse).